The following is a 310-amino-acid chain: Olfactory receptor 9A2 (310 aa).

Over 1–24 the chain is Extracellular; sequence MMDNHSSATEFHLLGFPGSQGLHH. Asn4 carries N-linked (GlcNAc...) asparagine glycosylation. A helical membrane pass occupies residues 25-45; the sequence is ILFAIFFFFYLVTLMGNTVII. Residues 46 to 53 are Cytoplasmic-facing; it reads VIVCVDKR. The helical transmembrane segment at 54–74 threads the bilayer; that stretch reads LQSPMYFFLSHLSTLEILVTT. The Extracellular segment spans residues 75 to 98; that stretch reads IIVPMMLWGLLFLGCRQYLSLHVS. Topologically, residues 117 to 135 are cytoplasmic; it reads DRYVAVCNPLRYNIIMNSS. Residues 136-156 form a helical membrane-spanning segment; it reads TCIWVVIVSWVFGFLSEIWPI. The Extracellular portion of the chain corresponds to 157–193; it reads YATFQFTFRKSNSLDHFYCDRGQLLKLSCDNTLLTEF. Residues 194 to 213 traverse the membrane as a helical segment; it reads ILFLMAVFILIGSLIPTIVS. Over 214 to 233 the chain is Cytoplasmic; sequence YTYIISTILKIPSASGRRKA. Residues 234 to 254 form a helical membrane-spanning segment; that stretch reads FSTFASHFTCVVIGYGSCLFL. Over 255 to 267 the chain is Extracellular; that stretch reads YVKPKQTQGVEYN. Residues 268-288 traverse the membrane as a helical segment; sequence KIVSLLVSVLTPFLNPFIFTL. Residues 289-310 lie on the Cytoplasmic side of the membrane; that stretch reads RNDKVKEALRDGMKRCCQLLKD.

It belongs to the G-protein coupled receptor 1 family.

Its subcellular location is the cell membrane. In terms of biological role, odorant receptor. This is Olfactory receptor 9A2 (OR9A2) from Homo sapiens (Human).